The primary structure comprises 279 residues: Release factor glutamine methyltransferase (279 aa).

S-adenosyl-L-methionine-binding residues include glutamate 141 and asparagine 187. 187 to 190 (NPPY) is a binding site for substrate.

It belongs to the protein N5-glutamine methyltransferase family. PrmC subfamily.

The catalysed reaction is L-glutaminyl-[peptide chain release factor] + S-adenosyl-L-methionine = N(5)-methyl-L-glutaminyl-[peptide chain release factor] + S-adenosyl-L-homocysteine + H(+). In terms of biological role, methylates the class 1 translation termination release factors RF1/PrfA and RF2/PrfB on the glutamine residue of the universally conserved GGQ motif. This is Release factor glutamine methyltransferase from Corynebacterium glutamicum (strain ATCC 13032 / DSM 20300 / JCM 1318 / BCRC 11384 / CCUG 27702 / LMG 3730 / NBRC 12168 / NCIMB 10025 / NRRL B-2784 / 534).